The primary structure comprises 135 residues: Small ribosomal subunit protein bS6 (135 aa).

Over residues 99-120 the composition is skewed to polar residues; that stretch reads QHSSLGRSTAPANPMASNTPRT. The segment at 99–135 is disordered; it reads QHSSLGRSTAPANPMASNTPRTEGQEQAKTEPQTAPA.

It belongs to the bacterial ribosomal protein bS6 family.

Binds together with bS18 to 16S ribosomal RNA. This is Small ribosomal subunit protein bS6 from Synechococcus sp. (strain RCC307).